We begin with the raw amino-acid sequence, 669 residues long: Methionine--tRNA ligase (669 aa).

A 'HIGH' region motif is present at residues 14–24; that stretch reads YYPSGKLHIGN. Residue His161 coordinates Zn(2+). The short motif at 309–313 is the 'KMSKS' region element; sequence KMSKS. ATP is bound at residue Lys312. In terms of domain architecture, tRNA-binding spans 566–669; the sequence is DFDKVELKVA…KEMPNGAGIA (104 aa).

Belongs to the class-I aminoacyl-tRNA synthetase family. MetG type 2B subfamily. In terms of assembly, homodimer.

It is found in the cytoplasm. The enzyme catalyses tRNA(Met) + L-methionine + ATP = L-methionyl-tRNA(Met) + AMP + diphosphate. Functionally, is required not only for elongation of protein synthesis but also for the initiation of all mRNA translation through initiator tRNA(fMet) aminoacylation. The chain is Methionine--tRNA ligase from Enterococcus faecalis (strain ATCC 700802 / V583).